The chain runs to 264 residues: Tryptophan synthase alpha chain (264 aa).

Active-site proton acceptor residues include Glu-45 and Asp-56.

It belongs to the TrpA family. Tetramer of two alpha and two beta chains.

It carries out the reaction (1S,2R)-1-C-(indol-3-yl)glycerol 3-phosphate + L-serine = D-glyceraldehyde 3-phosphate + L-tryptophan + H2O. The protein operates within amino-acid biosynthesis; L-tryptophan biosynthesis; L-tryptophan from chorismate: step 5/5. Its function is as follows. The alpha subunit is responsible for the aldol cleavage of indoleglycerol phosphate to indole and glyceraldehyde 3-phosphate. The chain is Tryptophan synthase alpha chain from Leptospira interrogans serogroup Icterohaemorrhagiae serovar copenhageni (strain Fiocruz L1-130).